We begin with the raw amino-acid sequence, 332 residues long: Glycerol-3-phosphate dehydrogenase [NAD(P)+] (332 aa).

3 residues coordinate NADPH: Trp13, Lys34, and Lys108. Positions 108, 136, and 138 each coordinate sn-glycerol 3-phosphate. Residue Ala140 coordinates NADPH. Lys191, Asp244, Ser254, Arg255, and Asn256 together coordinate sn-glycerol 3-phosphate. Residue Lys191 is the Proton acceptor of the active site. Arg255 lines the NADPH pocket. Residues Val279 and Glu281 each coordinate NADPH.

It belongs to the NAD-dependent glycerol-3-phosphate dehydrogenase family.

The protein localises to the cytoplasm. The enzyme catalyses sn-glycerol 3-phosphate + NAD(+) = dihydroxyacetone phosphate + NADH + H(+). It carries out the reaction sn-glycerol 3-phosphate + NADP(+) = dihydroxyacetone phosphate + NADPH + H(+). It participates in membrane lipid metabolism; glycerophospholipid metabolism. Functionally, catalyzes the reduction of the glycolytic intermediate dihydroxyacetone phosphate (DHAP) to sn-glycerol 3-phosphate (G3P), the key precursor for phospholipid synthesis. This Francisella tularensis subsp. mediasiatica (strain FSC147) protein is Glycerol-3-phosphate dehydrogenase [NAD(P)+].